A 62-amino-acid polypeptide reads, in one-letter code: MQKIFIILVLFCILKFNVDVEGRIASQCDLSACKERCEKQNKNGKCVIETEMDLVYRLCKCY.

An N-terminal signal peptide occupies residues 1–22 (MQKIFIILVLFCILKFNVDVEG). 3 disulfide bridges follow: Cys28-Cys46, Cys33-Cys59, and Cys37-Cys61.

The protein belongs to the short scorpion toxin superfamily. Potassium channel inhibitor family. Alpha-KTx 23 subfamily. In terms of tissue distribution, expressed by the venom gland.

The protein localises to the secreted. Functionally, may block potassium channels. The chain is U10-buthitoxin-Hj1a from Hottentotta judaicus (Black scorpion).